We begin with the raw amino-acid sequence, 154 residues long: Lipoprotein signal peptidase (154 aa).

Helical transmembrane passes span 55 to 75 (GQFW…VIYI) and 85 to 105 (AGVG…DRVF). Catalysis depends on residues Asp111 and Asp129. A helical membrane pass occupies residues 127-147 (VADSALTVGVILLFVHMFFFA).

The protein belongs to the peptidase A8 family.

The protein localises to the cell membrane. It catalyses the reaction Release of signal peptides from bacterial membrane prolipoproteins. Hydrolyzes -Xaa-Yaa-Zaa-|-(S,diacylglyceryl)Cys-, in which Xaa is hydrophobic (preferably Leu), and Yaa (Ala or Ser) and Zaa (Gly or Ala) have small, neutral side chains.. Its pathway is protein modification; lipoprotein biosynthesis (signal peptide cleavage). Functionally, this protein specifically catalyzes the removal of signal peptides from prolipoproteins. This Geobacillus kaustophilus (strain HTA426) protein is Lipoprotein signal peptidase.